A 690-amino-acid polypeptide reads, in one-letter code: Potassium-transporting ATPase ATP-binding subunit (690 aa).

Transmembrane regions (helical) follow at residues 49–69 (SPVM…CFVP), 72–92 (AVPT…VLFA), 229–249 (VALD…VVTL), and 253–273 (ALFA…VTLI). The active-site 4-aspartylphosphate intermediate is Asp317. ATP-binding positions include Asp354, Glu358, 385 to 392 (FSAETRLS), and Lys403. The Mg(2+) site is built by Asp526 and Asp530. 3 helical membrane-spanning segments follow: residues 596-616 (FAIL…LNVM), 624-644 (AILS…PLAL), and 662-682 (LLIY…AIDL).

This sequence belongs to the cation transport ATPase (P-type) (TC 3.A.3) family. Type IA subfamily. In terms of assembly, the system is composed of three essential subunits: KdpA, KdpB and KdpC.

The protein resides in the cell inner membrane. It catalyses the reaction K(+)(out) + ATP + H2O = K(+)(in) + ADP + phosphate + H(+). Functionally, part of the high-affinity ATP-driven potassium transport (or Kdp) system, which catalyzes the hydrolysis of ATP coupled with the electrogenic transport of potassium into the cytoplasm. This subunit is responsible for energy coupling to the transport system and for the release of the potassium ions to the cytoplasm. The polypeptide is Potassium-transporting ATPase ATP-binding subunit (Pseudomonas aeruginosa (strain ATCC 15692 / DSM 22644 / CIP 104116 / JCM 14847 / LMG 12228 / 1C / PRS 101 / PAO1)).